A 165-amino-acid chain; its full sequence is Transmembrane protein 253 (165 aa).

The next 3 helical transmembrane spans lie at L31 to V51, M60 to L80, and L91 to V111. Residues E145–Q165 are disordered. Residues T155–Q165 are compositionally biased toward polar residues.

It is found in the membrane. The sequence is that of Transmembrane protein 253 (TMEM253) from Bos taurus (Bovine).